Reading from the N-terminus, the 256-residue chain is Non-specific lipid transfer protein GPI-anchored 23 (256 aa).

Residues M1–A21 form the signal peptide. The N-linked (GlcNAc...) asparagine glycan is linked to N41. 4 disulfides stabilise this stretch: C45–C88, C55–C72, C73–C113, and C86–C121. Residues T125–I230 are disordered. The segment covering S138 to I230 has biased composition (low complexity). Residue S225 is the site of GPI-anchor amidated serine attachment. Residues P226–A256 constitute a propeptide, removed in mature form.

This sequence belongs to the plant LTP family. Confined to the anthers of the inflorescence.

It is found in the cell membrane. Functionally, probable lipid transfer protein. The chain is Non-specific lipid transfer protein GPI-anchored 23 from Arabidopsis thaliana (Mouse-ear cress).